The primary structure comprises 303 residues: sn-1-specific diacylglycerol lipase ABHD11 (303 aa).

Residues M1–F22 constitute a mitochondrion transit peptide. Residues P55 to R290 enclose the AB hydrolase-1 domain. An N6-succinyllysine modification is found at K75. Residues S129, D225, and H284 each act as charge relay system in the active site.

This sequence belongs to the AB hydrolase superfamily. In terms of assembly, interacts with OGDH and DLST; this interaction maintains the functional lipoylation of the 2-oxoglutarate dehydrogenase complex. In terms of processing, phosphorylated.

Its subcellular location is the mitochondrion. The protein localises to the mitochondrion matrix. It carries out the reaction a 1,3-diacyl-sn-glycerol + H2O = a 1-acyl-sn-glycerol + a fatty acid + H(+). The catalysed reaction is 1-octadecanoyl-2-(9Z-octadecenoyl)-sn-glycerol + H2O = 2-(9Z-octadecenoyl)-glycerol + octadecanoate + H(+). It catalyses the reaction 1-octadecanoyl-2-(4Z,7Z,10Z,13Z,16Z,19Z-docosahexaenoyl)-sn-glycerol + H2O = 2-(4Z,7Z,10Z,13Z,16Z,19Z-docosahexaenoyl)-glycerol + octadecanoate + H(+). The enzyme catalyses a 1,2-diacyl-sn-glycerol + H2O = a 2-acylglycerol + a fatty acid + H(+). It carries out the reaction 1,2-didecanoylglycerol + H2O = decanoylglycerol + decanoate + H(+). The catalysed reaction is 1-octadecanoyl-2-(5Z,8Z,11Z,14Z-eicosatetraenoyl)-sn-glycerol + H2O = 2-(5Z,8Z,11Z,14Z-eicosatetraenoyl)-glycerol + octadecanoate + H(+). Its activity is regulated as follows. The diacylglycerol lipase activity can be modulated by phosphorylation by cAMP-dependent protein kinase. Its function is as follows. Catalyzes the hydrolysis of diacylglycerol in vitro and may function as a key regulator in lipid metabolism, namely by regulating the intracellular levels of diacylglycerol. 1,2-diacyl-sn-glycerols are the preferred substrate over 1,3-diacyl-sn-glycerols. The enzyme hydrolyzes stearate in preference to palmitate from the sn-1 position of 1,2-diacyl-sn-glycerols. Maintains the functional lipoylation of the 2-oxoglutarate dehydrogenase complex (OGDHc) through its interaction with the OGDHc by preventing the formation of lipoyl adducts. In addition, is also required for the expansion and differentiation of embryonic stem cells (ESCs). The polypeptide is sn-1-specific diacylglycerol lipase ABHD11 (Bos taurus (Bovine)).